Reading from the N-terminus, the 427-residue chain is Interleukin-13 receptor subunit alpha-1 (427 aa).

The first 21 residues, 1–21, serve as a signal peptide directing secretion; sequence MEWPARLCGLWALLLCAGGGG. Over 22-343 the chain is Extracellular; sequence GGGGAAPTET…MSIGKKRNST (322 aa). Fibronectin type-III domains follow at residues 34–123, 128–226, and 227–339; these read PVTN…PPEG, AVTE…TSRV, and KPDP…IGKK. N-linked (GlcNAc...) asparagine glycosylation is found at Asn-37 and Asn-61. Cystine bridges form between Cys-62-Cys-102, Cys-95-Cys-117, and Cys-134-Cys-144. N-linked (GlcNAc...) asparagine glycans are attached at residues Asn-105, Asn-138, and Asn-157. A disulfide bond links Cys-173 and Cys-185. N-linked (GlcNAc...) asparagine glycosylation is found at Asn-235, Asn-265, Asn-293, Asn-329, and Asn-341. Disulfide bonds link Cys-257–Cys-320 and Cys-282–Cys-296. The WSXWS motif signature appears at 327 to 331; it reads WSNWS. Residues 344–367 traverse the membrane as a helical segment; it reads LYITMLLIVPVIVAGAIIVLLLYL. Over 368–427 the chain is Cytoplasmic; that stretch reads KRLKIIIFPPIPDPGKIFKEMFGDQNDDTLHWKKYDIYEKQTKEETDSVVLIENLKKASQ. Positions 374-382 match the Box 1 motif motif; the sequence is IFPPIPDPG.

Belongs to the type I cytokine receptor family. Type 5 subfamily. As to quaternary structure, interleukin-13 receptor is a complex of IL4R, IL13RA1, and possibly other components. Interacts with TRAF3IP1. Interacts with IL4. Ubiquitous. Highest levels in heart, liver, skeletal muscle and ovary; lowest levels in brain, lung and kidney. Also found in B-cells, T-cells and endothelial cells.

It localises to the membrane. Its function is as follows. Binds with low affinity to interleukin-13 (IL13). Together with IL4RA can form a functional receptor for IL13. Also serves as an alternate accessory protein to the common cytokine receptor gamma chain for interleukin-4 (IL4) signaling, but cannot replace the function of IL2RG in allowing enhanced interleukin-2 (IL2) binding activity. The polypeptide is Interleukin-13 receptor subunit alpha-1 (IL13RA1) (Homo sapiens (Human)).